A 2322-amino-acid polypeptide reads, in one-letter code: Genome polyprotein (2322 aa).

The region spanning 29-182 (MEFTLYNGEK…NPADVLVFVP (154 aa)) is the Peptidase C28 domain. Active-site for leader protease activity residues include Cys51, His148, and Asp163. Disordered regions lie at residues 199-219 (RLRG…SGNT) and 238-262 (QLGD…HTNN). Gly202 carries N-myristoyl glycine; by host lipidation. Polar residues-rich tracts occupy residues 204 to 219 (GQSS…SGNT) and 238 to 251 (QLGD…SNEG). A compositionally biased stretch (low complexity) spans 252 to 262 (STDTTSTHTNN). The Cell attachment site signature appears at 869–871 (RGD). Residues 1189 to 1353 (NVHIANLCKV…DGYKINNKLD (165 aa)) form the SF3 helicase domain. 1217-1224 (GKSGQGKS) contributes to the ATP binding site. Residues 1484–1504 (FEVVALCLTLLANIVIMLRQA) lie within the membrane without spanning it. The segment at 1512–1574 (DDPLDGDVTL…PRAEGPYAGP (63 aa)) is disordered. Over residues 1539–1553 (FRERSPTEQGTREDA) the composition is skewed to basic and acidic residues. An O-(5'-phospho-RNA)-tyrosine mark is found at Tyr1571, Tyr1594, and Tyr1618. Residues 1642–1838 (APPTDLQKMV…YCSCVSRSML (197 aa)) enclose the Peptidase C3 domain. The active-site For protease 3C activity; Proton donor/acceptor is the His1685. Residues Asp1723 and Cys1802 each act as for protease 3C activity in the active site. Positions 1868–1876 (MRKTKLAPT) match the Nuclear localization signal motif. Residues 2086 to 2204 (KNVWDVDYSA…ASDYDLDFEA (119 aa)) form the RdRp catalytic domain.

It belongs to the picornaviruses polyprotein family. Interacts with host ISG15. As to quaternary structure, interacts (via R-G-D motif) with host ITGAV/ITGB6. Interacts with host MAVS; this interaction inhibits binding of host TRAF3 to MAVS, thereby suppressing interferon-mediated responses. In terms of assembly, forms homooligomers. Homohexamer. Interacts with host VIM. Interacts with host BECN1. As to quaternary structure, interacts with host DCTN3. In terms of assembly, interacts with RNA-dependent RNA polymerase; this interaction allows 3B-1 to binds 2 polymerases and act as a primer. It also allows the recruitment of the RNA-dependent RNA polymerase to host membranes. Interacts with RNA-dependent RNA polymerase; this interaction allows 3B-2 to act as a primer. As to quaternary structure, interacts with RNA-dependent RNA polymerase; this interaction allows 3B-3 to act as a primer. In terms of assembly, interacts with 3B-1; this interaction allows 3B-1 to binds 2 polymerases and act as a primer. It also allows the recruitment of the RNA-dependent RNA polymerase to host membranes. Interacts with 3B-2; this interaction allows 3B-2 to act as a primer. Interacts with 3B-3; this interaction allows 3B-3 to act as a primer. Removes six residues from its own C-terminus, generating sLb(pro). In terms of processing, specific enzymatic cleavages in vivo by the viral proteases yield a variety of precursors and mature proteins. The polyprotein seems to be cotranslationally cleaved at the 2A/2B junction by a ribosomal skip from one codon to the next without formation of a peptide bond. This process would release the L-P1-2A peptide from the translational complex. Post-translationally, during virion maturation, immature virions are rendered infectious following cleavage of VP0 into VP4 and VP2. This maturation seems to be an autocatalytic event triggered by the presence of RNA in the capsid and is followed by a conformational change of the particle. Myristoylation is required during RNA encapsidation and formation of the mature virus particle. In terms of processing, uridylylated by the polymerase and covalently linked to the 5'-end of genomic RNA. These uridylylated forms act as a nucleotide-peptide primer for the polymerase.

It is found in the host nucleus. Its subcellular location is the host cytoplasm. The protein resides in the virion. It localises to the host endoplasmic reticulum membrane. The protein localises to the host cytoplasmic vesicle membrane. The enzyme catalyses Autocatalytically cleaves itself from the polyprotein of the foot-and-mouth disease virus by hydrolysis of a Lys-|-Gly bond, but then cleaves host cell initiation factor eIF-4G at bonds -Gly-|-Arg- and -Lys-|-Arg-.. It catalyses the reaction a ribonucleoside 5'-triphosphate + H2O = a ribonucleoside 5'-diphosphate + phosphate + H(+). The catalysed reaction is RNA(n) + a ribonucleoside 5'-triphosphate = RNA(n+1) + diphosphate. It carries out the reaction Selective cleavage of Gln-|-Gly bond in the poliovirus polyprotein. In other picornavirus reactions Glu may be substituted for Gln, and Ser or Thr for Gly.. Functionally, autocatalytically cleaves itself from the polyprotein at the L/VP0 junction. Also cleaves the host translation initiation factors EIF4G1 and EIF4G3, in order to shut off the capped cellular mRNA transcription. Plays a role in counteracting host innate antiviral response using diverse mechanisms. Possesses a deubiquitinase activity acting on both 'Lys-48' and 'Lys-63'-linked polyubiquitin chains. In turn, inhibits the ubiquitination and subsequent activation of key signaling molecules of type I IFN response such as host RIGI, TBK1, TRAF3 and TRAF6. Inhibits host NF-kappa-B activity by inducing a decrease in RELA mRNA levels. Cleaves a peptide bond in the C-terminus of host ISG15, resulting in the damaging of this modifier that can no longer be attached to target proteins. Also cleaves host G3BP1 and G3BP2 in order to inhibit cytoplasmic stress granules assembly. In terms of biological role, lies on the inner surface of the capsid shell. After binding to the host receptor, the capsid undergoes conformational changes. Capsid protein VP4 is released, capsid protein VP1 N-terminus is externalized, and together, they shape a pore in the host membrane through which the viral genome is translocated into the host cell cytoplasm. After genome has been released, the channel shrinks. Forms an icosahedral capsid of pseudo T=3 symmetry with capsid proteins VP1 and VP3. The capsid is composed of 60 copies of each capsid protein organized in the form of twelve pentamers and encloses the viral positive strand RNA genome. Upon acidifcation in the endosome, dissociates into pentamers. Its function is as follows. Forms an icosahedral capsid of pseudo T=3 symmetry with capsid proteins VP0 and VP3. The capsid is composed of 60 copies of each capsid protein organized in the form of twelve pentamers and encloses the viral positive strand RNA genome. Upon acidifcation in the endosome, dissociates into pentamers. Functionally, forms an icosahedral capsid of pseudo T=3 symmetry with capsid proteins VP2 and VP3. The capsid is composed of 60 copies of each capsid protein organized in the form of twelve pentamers and encloses the viral positive strand RNA genome. Mediates cell entry by attachment to an integrin receptor, usually host ITGAV/ITGB6. In addition, targets host MAVS to suppress type I IFN pathway. Upon acidifcation in the endosome, dissociates into pentamers. In terms of biological role, mediates self-processing of the polyprotein by a translational effect termed 'ribosome skipping'. Mechanistically, 2A-mediated cleavage occurs between the C-terminal glycine and the proline of the downstream protein 2B. In the case of foot-and-mouth disease virus, the 2A oligopeptide is post-translationally 'trimmed' from the C-terminus of the upstream protein 1D by 3C proteinase. Plays an essential role in the virus replication cycle by acting as a viroporin. Creates a pore in the host endoplasmic reticulum and as a consequence releases Ca2+ in the cytoplasm of infected cell. In turn, high levels of cytoplasmic calcium may trigger membrane trafficking and transport of viral ER-associated proteins to viroplasms, sites of viral genome replication. Its function is as follows. Associates with and induces structural rearrangements of intracellular membranes. Triggers host autophagy by interacting with host BECN1 and thereby promotes viral replication. Participates in viral replication and interacts with host DHX9. Displays RNA-binding, nucleotide binding and NTPase activities. May play a role in virion morphogenesis and viral RNA encapsidation by interacting with the capsid protein VP3. Functionally, plays important roles in virus replication, virulence and host range. Cooperates with host DDX56 to inhibit IRF3 nuclear translocation and subsequent type I interferon production. In terms of biological role, covalently linked to the 5'-end of both the positive-strand and negative-strand genomic RNAs. Acts as a genome-linked replication primer. Cysteine protease that generates mature viral proteins from the precursor polyprotein. In addition to its proteolytic activity, binds to viral RNA and thus influences viral genome replication. RNA and substrate bind cooperatively to the protease. Its function is as follows. RNA-directed RNA polymerase 3D-POL replicates genomic and antigenomic RNA by recognizing replications specific signals. Covalently attaches UMP to a tyrosine of VPg, which is used to prime RNA synthesis. The positive stranded RNA genome is first replicated at virus induced membranous vesicles, creating a dsRNA genomic replication form. This dsRNA is then used as template to synthesize positive stranded RNA genomes. ss(+)RNA genomes are either translated, replicated or encapsidated. The protein is Genome polyprotein of Foot-and-mouth disease virus (isolate Swine/Taiwan/OTai/1997 serotype O) (FMDV).